The following is a 966-amino-acid chain: Insulin-degrading enzyme-like 2 (966 aa).

Residue His71 participates in Zn(2+) binding. The active-site Proton acceptor is the Glu74. A Zn(2+)-binding site is contributed by His75. Residue Glu145 is part of the active site. Residue Glu152 participates in Zn(2+) binding.

It belongs to the peptidase M16 family. Zn(2+) serves as cofactor.

The sequence is that of Insulin-degrading enzyme-like 2 from Arabidopsis thaliana (Mouse-ear cress).